We begin with the raw amino-acid sequence, 361 residues long: MESIFHEKQEGSLCAQHCLNNLLQGEYFSPVELSSIAHQLDEEERMRMAEGGVTSEDYRTFLQQPSGNMDDSGFFSIQVISNALKVWGLELILFNSPEYQRLRIDPINERSFICNYKEHWFTVRKLGKQWFNLNSLLTGPELISDTYLALFLAQLQQEGYSIFVVKGDLPDCEADQLLQMIRVQQMHRPKLIGEELAQLKEQRVHKTDLERVLEANDGSGMLDEDEEDLQRALALSRQEIDMEDEEADLRRAIQLSMQGSSRNISQDMTQTSGTNLTSEELRKRREAYFEKQQQKQQQQQQQQQQGDLSGQSSHPCERPATSSGALGSDLGDAMSEEDMLQAAVTMSLETVRNDLKTEGKK.

M1 participates in a covalent cross-link: Peptide (Met-Gly) (interchain with G-Cter in ubiquitin). In terms of domain architecture, Josephin spans 1–180; sequence MESIFHEKQE…DCEADQLLQM (180 aa). The Nucleophile role is filled by C14. H119 (proton acceptor) is an active-site residue. The active site involves N134. Residue K200 forms a Glycyl lysine isopeptide (Lys-Gly) (interchain with G-Cter in ubiquitin) linkage. S219 is subject to Phosphoserine. 2 consecutive UIM domains span residues 224 to 243 and 244 to 263; these read EDEE…IDME and DEEA…SSRN. The span at 258-278 shows a compositional bias: polar residues; that stretch reads QGSSRNISQDMTQTSGTNLTS. A disordered region spans residues 258 to 338; that stretch reads QGSSRNISQD…DLGDAMSEED (81 aa). Phosphoserine is present on residues S265 and S272. Over residues 279–293 the composition is skewed to basic and acidic residues; it reads EELRKRREAYFEKQQ. The segment covering 294–305 has biased composition (low complexity); the sequence is QKQQQQQQQQQQ. Residues 306–325 show a composition bias toward polar residues; the sequence is GDLSGQSSHPCERPATSSGA. Residue S328 is modified to Phosphoserine. The region spanning 331 to 349 is the UIM 3 domain; sequence GDAMSEEDMLQAAVTMSLE.

In terms of assembly, interacts with STUB1/CHIP (when monoubiquitinated). Interacts with DNA repair proteins RAD23A and RAD23B. Interacts with BECN1 (via its poly-Gln domain). Interacts with PRKN, UBR2, VCP and tubulin. Short isoform 1 interacts with CASP7. In terms of processing, monoubiquitinated N-terminally by UBE2W, possibly leading to activate the deubiquitinating enzyme activity. As to expression, ubiquitous.

The protein localises to the nucleus matrix. The protein resides in the nucleus. Its subcellular location is the lysosome membrane. It carries out the reaction Thiol-dependent hydrolysis of ester, thioester, amide, peptide and isopeptide bonds formed by the C-terminal Gly of ubiquitin (a 76-residue protein attached to proteins as an intracellular targeting signal).. In terms of biological role, deubiquitinating enzyme involved in protein homeostasis maintenance, transcription, cytoskeleton regulation, myogenesis and degradation of misfolded chaperone substrates. Binds long polyubiquitin chains and trims them, while it has weak or no activity against chains of 4 or less ubiquitins. Involved in degradation of misfolded chaperone substrates via its interaction with STUB1/CHIP: recruited to monoubiquitinated STUB1/CHIP, and restricts the length of ubiquitin chain attached to STUB1/CHIP substrates and preventing further chain extension. Interacts with key regulators of transcription and represses transcription: acts as a histone-binding protein that regulates transcription. Acts as a negative regulator of mTORC1 signaling in response to amino acid deprivation by mediating deubiquitination of RHEB, thereby promoting RHEB inactivation by the TSC-TBC complex. Regulates autophagy via the deubiquitination of 'Lys-402' of BECN1 leading to the stabilization of BECN1. The sequence is that of Ataxin-3 from Homo sapiens (Human).